We begin with the raw amino-acid sequence, 245 residues long: 14-3-3 protein theta (245 aa).

It belongs to the 14-3-3 family. In terms of assembly, homodimer, and heterodimer with other family members.

The protein resides in the cytoplasm. Adapter protein implicated in the regulation of a large spectrum of both general and specialized signaling pathways. Binds to a large number of partners, usually by recognition of a phosphoserine or phosphothreonine motif. Binding generally results in the modulation of the activity of the binding partner. The chain is 14-3-3 protein theta (YWHAQ) from Gallus gallus (Chicken).